The primary structure comprises 370 residues: Dihydroorotate dehydrogenase (370 aa).

Substrate-binding positions include lysine 82, 135 to 139 (NSFGM), and asparagine 200. 82 to 83 (KT) contributes to the FMN binding site. Asparagine 200 provides a ligand contact to FMN. Cysteine 203 functions as the Nucleophile in the catalytic mechanism. Residues lysine 241 and isoleucine 269 each coordinate FMN. Residue 270–271 (NT) coordinates substrate. FMN-binding positions include glycine 297, 328-329 (GG), and 350-351 (AT).

The protein belongs to the dihydroorotate dehydrogenase family. FMN is required as a cofactor.

The enzyme catalyses (S)-dihydroorotate + A = orotate + AH2. Its pathway is pyrimidine metabolism; UMP biosynthesis via de novo pathway. Catalyzes the conversion of dihydroorotate to orotate. Participates in the pyrimidine biosynthetic pathway. The sequence is that of Dihydroorotate dehydrogenase (pyr4) from Dictyostelium discoideum (Social amoeba).